Reading from the N-terminus, the 517-residue chain is Mucin-like protein 3 (517 aa).

The N-terminal stretch at 1 to 29 (MAQPVHSLCSAFGLQCCLLFLLASWGAGA) is a signal peptide. The Extracellular segment spans residues 30–448 (TTFQEYQKTG…GENDSFPAWA (419 aa)). A disordered region spans residues 67-341 (SGQRPPELPK…PTENLGNTTL (275 aa)). Over residues 83–93 (QKRHCNTTRHS) the composition is skewed to basic residues. A glycan (N-linked (GlcNAc...) asparagine) is linked at Asn88. A compositionally biased stretch (basic and acidic residues) spans 105–116 (TIDHKSSTDNHE). An N-linked (GlcNAc...) asparagine glycan is attached at Asn124. Residues 169–179 (RKSTTGKSTVT) show a composition bias toward polar residues. The segment covering 180-190 (RKSDKTGRPLE) has biased composition (basic and acidic residues). Residues 194–213 (STLDKTSTSSHKTTTSFHNS) are compositionally biased toward low complexity. 3 stretches are compositionally biased toward polar residues: residues 214–225 (GNSQTKQKSTSF), 232–243 (ASKTTYKTTGTP), and 263–283 (TKTT…QSLA). Residues 305–317 (TENRERTANENKK) show a composition bias toward basic and acidic residues. An N-linked (GlcNAc...) asparagine glycan is attached at Asn338. The helical transmembrane segment at 449–469 (IVIVVLVAVILLLVFLGLIFL) threads the bilayer. Residues 470 to 517 (VSYMMRTRRTLTQNTQYNDAEDEGGPNSYPVYLMEQQNLGMGQIPSPR) lie on the Cytoplasmic side of the membrane.

Detected in lung, esophagus, stomach, rectum, skin, cervix, testis, kidney, uterus and small intestine. Expressed in pancreas (at protein level).

It localises to the cell membrane. The protein localises to the cytoplasm. Its function is as follows. May modulate NF-kappaB signaling and play a role in cell growth. This Homo sapiens (Human) protein is Mucin-like protein 3.